A 135-amino-acid chain; its full sequence is C-type lectin APL (135 aa).

4 disulfide bridges follow: Cys-3–Cys-14, Cys-31–Cys-131, Cys-38–Cys-133, and Cys-106–Cys-123. The region spanning 10–132 (MNGLCYKIFD…CESKNAFLCQ (123 aa)) is the C-type lectin domain. 5 residues coordinate Ca(2+): Gln-96, Asp-98, Glu-104, Asn-119, and Asp-120. The Galactose-binding signature appears at 96-98 (QPD).

It belongs to the true venom lectin family. In terms of assembly, homodimer; disulfide-linked. In terms of tissue distribution, expressed by the venom gland.

It is found in the secreted. Beta-galactoside lectin that agglutinates rabbit and human erythrocytes in a calcium-dependent fashion (MHC is 0.21 ug/ml on rabbit erythrocytes). Galactose (15 mM), lactose (20 mM), rhamnose (20 mM) and EGTA strongly inhibit this activity. This Agkistrodon piscivorus piscivorus (Eastern cottonmouth) protein is C-type lectin APL.